Here is a 328-residue protein sequence, read N- to C-terminus: MNNVDAILQAGQAAVAAAADLIELEQVKARFLGKSGELTELLKQLGKLAPEERKAAGATINQAKQAFEAAHNDKRDQLNAAKLEAQLAAEALDVTLPGRGSVGGGLHPVALTLERIAGLFRTMGFEVADGPEIESDFYNFQALNIPENHPARAMQDTFYVENCDVLRTHTSPIQARFMESHQPPIKIVAPGRVYRVDSDATHSPMFHQMEGLWVEEGVSFADLKAVVTDFLRRFFERDDLQVRFRPSFFPFTETSAEIDVLDEQGKWLEVGGCGMVHPKVLSIANIDPEKYTGFAFGIGLDRFAMLRYGVNDLRLFFENDLNFLKQFN.

Glu-253 serves as a coordination point for Mg(2+).

This sequence belongs to the class-II aminoacyl-tRNA synthetase family. Phe-tRNA synthetase alpha subunit type 1 subfamily. As to quaternary structure, tetramer of two alpha and two beta subunits. Requires Mg(2+) as cofactor.

It localises to the cytoplasm. The enzyme catalyses tRNA(Phe) + L-phenylalanine + ATP = L-phenylalanyl-tRNA(Phe) + AMP + diphosphate + H(+). This Chromobacterium violaceum (strain ATCC 12472 / DSM 30191 / JCM 1249 / CCUG 213 / NBRC 12614 / NCIMB 9131 / NCTC 9757 / MK) protein is Phenylalanine--tRNA ligase alpha subunit.